A 450-amino-acid polypeptide reads, in one-letter code: Phosphoglucosamine mutase (450 aa).

The active-site Phosphoserine intermediate is Ser-101. Ser-101, Asp-242, Asp-244, and Asp-246 together coordinate Mg(2+). At Ser-101 the chain carries Phosphoserine.

It belongs to the phosphohexose mutase family. Mg(2+) is required as a cofactor. Post-translationally, activated by phosphorylation.

The enzyme catalyses alpha-D-glucosamine 1-phosphate = D-glucosamine 6-phosphate. Functionally, catalyzes the conversion of glucosamine-6-phosphate to glucosamine-1-phosphate. The sequence is that of Phosphoglucosamine mutase from Rhodopseudomonas palustris (strain TIE-1).